We begin with the raw amino-acid sequence, 150 residues long: Large ribosomal subunit protein bL9 (150 aa).

The protein belongs to the bacterial ribosomal protein bL9 family.

Binds to the 23S rRNA. This is Large ribosomal subunit protein bL9 from Corynebacterium jeikeium (strain K411).